A 278-amino-acid chain; its full sequence is MYDLTGKHVCYVADCGGIALETSKVLMTKNIAKLAILQSVENPPAIAQLQSIKHSTQIFFWTFDVTMAREEMKKYFDEVMVQMDYIDVLINGATLCDERNIDATINTNLTGMMNTVATVLPYMDRKMGGSGGLIVNVTSVIGLDPSPVFCAYSASKFGVIGFTRSLADPLYFTQNGVAVMAVCCGPTKVFVDRELTAFLAYGQSFADRLRRAPCQSTAVCGQNIVNAIERSENGQIWIADKGGLESVALHWYWHMADQFVNYMQSTDDEDQEFFLGQR.

11–34 (YVADCGGIALETSKVLMTKNIAKL) is an NAD(+) binding site. Residue S139 participates in substrate binding. Y152 functions as the Proton acceptor in the catalytic mechanism.

The protein belongs to the short-chain dehydrogenases/reductases (SDR) family.

This Drosophila pseudoobscura pseudoobscura (Fruit fly) protein is Alcohol dehydrogenase-related 31 kDa protein (Adhr).